A 291-amino-acid chain; its full sequence is Porphobilinogen deaminase (291 aa).

Cys237 is modified (S-(dipyrrolylmethanemethyl)cysteine).

It belongs to the HMBS family. In terms of assembly, monomer. The cofactor is dipyrromethane.

The enzyme catalyses 4 porphobilinogen + H2O = hydroxymethylbilane + 4 NH4(+). It participates in porphyrin-containing compound metabolism; protoporphyrin-IX biosynthesis; coproporphyrinogen-III from 5-aminolevulinate: step 2/4. Its function is as follows. Tetrapolymerization of the monopyrrole PBG into the hydroxymethylbilane pre-uroporphyrinogen in several discrete steps. The chain is Porphobilinogen deaminase from Clostridium perfringens (strain SM101 / Type A).